The sequence spans 164 residues: Peptidyl-prolyl cis-trans isomerase A-like 4H (164 aa).

A PPIase cyclophilin-type domain is found at 7-163 (FFDITVDGKP…KKITIADCGQ (157 aa)). N-linked (GlcNAc...) asparagine glycans are attached at residues asparagine 71 and asparagine 108.

It belongs to the cyclophilin-type PPIase family. PPIase A subfamily.

Its subcellular location is the cytoplasm. It carries out the reaction [protein]-peptidylproline (omega=180) = [protein]-peptidylproline (omega=0). PPIases accelerate the folding of proteins. It catalyzes the cis-trans isomerization of proline imidic peptide bonds in oligopeptides. This Homo sapiens (Human) protein is Peptidyl-prolyl cis-trans isomerase A-like 4H.